The following is a 209-amino-acid chain: Pyridoxine/pyridoxamine 5'-phosphate oxidase (209 aa).

Residues 7–10 and K64 each bind substrate; that span reads REDY. Residues 59-64, 74-75, R80, and K81 each bind FMN; these read RIVLLK and FT. Residues Y121, R125, and S129 each contribute to the substrate site. FMN contacts are provided by residues 138 to 139 and W182; that span reads QS. 188–190 contributes to the substrate binding site; that stretch reads RLH. R192 lines the FMN pocket.

This sequence belongs to the pyridoxamine 5'-phosphate oxidase family. Homodimer. Requires FMN as cofactor.

It catalyses the reaction pyridoxamine 5'-phosphate + O2 + H2O = pyridoxal 5'-phosphate + H2O2 + NH4(+). The catalysed reaction is pyridoxine 5'-phosphate + O2 = pyridoxal 5'-phosphate + H2O2. It functions in the pathway cofactor metabolism; pyridoxal 5'-phosphate salvage; pyridoxal 5'-phosphate from pyridoxamine 5'-phosphate: step 1/1. Its pathway is cofactor metabolism; pyridoxal 5'-phosphate salvage; pyridoxal 5'-phosphate from pyridoxine 5'-phosphate: step 1/1. In terms of biological role, catalyzes the oxidation of either pyridoxine 5'-phosphate (PNP) or pyridoxamine 5'-phosphate (PMP) into pyridoxal 5'-phosphate (PLP). The sequence is that of Pyridoxine/pyridoxamine 5'-phosphate oxidase from Actinobacillus pleuropneumoniae serotype 7 (strain AP76).